The sequence spans 237 residues: Uridylate kinase (237 aa).

Position 12–15 (Lys-12–Gly-15) interacts with ATP. UMP is bound at residue Gly-53. Gly-54 and Arg-58 together coordinate ATP. Residues Asp-73 and Thr-134–Thr-141 each bind UMP. Thr-161, Tyr-167, and Asp-170 together coordinate ATP.

Belongs to the UMP kinase family. As to quaternary structure, homohexamer.

Its subcellular location is the cytoplasm. The catalysed reaction is UMP + ATP = UDP + ADP. The protein operates within pyrimidine metabolism; CTP biosynthesis via de novo pathway; UDP from UMP (UMPK route): step 1/1. Inhibited by UTP. Its function is as follows. Catalyzes the reversible phosphorylation of UMP to UDP. In Rhizorhabdus wittichii (strain DSM 6014 / CCUG 31198 / JCM 15750 / NBRC 105917 / EY 4224 / RW1) (Sphingomonas wittichii), this protein is Uridylate kinase.